The primary structure comprises 600 residues: Aspartate--tRNA ligase (600 aa).

E175 contacts L-aspartate. The aspartate stretch occupies residues 199–202 (QLFK). Residue R221 participates in L-aspartate binding. ATP contacts are provided by residues 221–223 (RDE) and Q230. An L-aspartate-binding site is contributed by H448. E484 contacts ATP. R491 contacts L-aspartate. An ATP-binding site is contributed by 536 to 539 (GLDR).

The protein belongs to the class-II aminoacyl-tRNA synthetase family. Type 1 subfamily. Homodimer.

Its subcellular location is the cytoplasm. It carries out the reaction tRNA(Asp) + L-aspartate + ATP = L-aspartyl-tRNA(Asp) + AMP + diphosphate. Functionally, catalyzes the attachment of L-aspartate to tRNA(Asp) in a two-step reaction: L-aspartate is first activated by ATP to form Asp-AMP and then transferred to the acceptor end of tRNA(Asp). The polypeptide is Aspartate--tRNA ligase (Limosilactobacillus reuteri (strain DSM 20016) (Lactobacillus reuteri)).